The chain runs to 659 residues: 1,4-alpha-glucan branching enzyme GlgB 2 (659 aa).

The tract at residues 1–26 is disordered; sequence MRNYKELKHEKNGNVTEKIGENKGKS. The Nucleophile role is filled by aspartate 337. Glutamate 390 functions as the Proton donor in the catalytic mechanism.

This sequence belongs to the glycosyl hydrolase 13 family. GlgB subfamily. In terms of assembly, monomer.

It carries out the reaction Transfers a segment of a (1-&gt;4)-alpha-D-glucan chain to a primary hydroxy group in a similar glucan chain.. Its pathway is glycan biosynthesis; glycogen biosynthesis. Functionally, catalyzes the formation of the alpha-1,6-glucosidic linkages in glycogen by scission of a 1,4-alpha-linked oligosaccharide from growing alpha-1,4-glucan chains and the subsequent attachment of the oligosaccharide to the alpha-1,6 position. This is 1,4-alpha-glucan branching enzyme GlgB 2 from Clostridium perfringens (strain SM101 / Type A).